A 1053-amino-acid chain; its full sequence is MAFLKLRDQPSLVQAIFNGDPDEVRALIFKKEDVNFQDNEKRTPLHAAAYLGDAEIIELLILSGARVNAKDSKWLTPLHRAVASCSEEAVQVLLKHSADVNARDKNWQTPLHIAAANKAVKCAEALVPLLSNVNVSDRAGRTALHHAAFSGHGEMVKLLLSRGANINAFDKKDRRAIHWAAYMGHIEVVKLLVSHGAEVTCKDKKSYTPLHAAASSGMISVVKYLLDLGVDMNEPNAYGNTPLHVACYNGQDVVVNELIDCGAIVNQKNEKGFTPLHFAAASTHGALCLELLVGNGADVNMKSKDGKTPLHMTALHGRFSRSQTIIQSGAVIDCEDKNGNTPLHIAARYGHELLINTLITSGADTAKRGIHGMFPLHLAALSGFSDCCRKLLSSGFDIDTPDDFGRTCLHAAAAGGNLECLNLLLNTGADFNKKDKFGRSPLHYAAANCNYQCLFALVGSGASVNDLDERGCTPLHYAATSDTDGKCLEYLLRNDANPGIRDKQGYNAVHYSAAYGHRLCLQLIASETPLDVLMETSGTDMLSDSDNRATISPLHLAAYHGHHQALEVLVQSLLDLDVRNSSGRTPLDLAAFKGHVECVDVLINQGASILVKDYILKRTPIHAAATNGHSECLRLLIGNAEPQNAVDIQDGNGQTPLMLSVLNGHTDCVYSLLNKGANVDAKDKWGRTALHRGAVTGHEECVDALLQHGAKCLLRDSRGRTPIHLSAACGHIGVLGALLQSAASMDANPATADNHGYTALHWACYNGHETCVELLLEQEVFQKTEGNAFSPLHCAVINDNEGAAEMLIDTLGASIVNATDSKGRTPLHAAAFTDHVECLQLLLSHNAQVNSVDSTGKTPLMMAAENGQTNTVEMLVSSASAELTLQDNSKNTALHLACSKGHETSALLILEKITDRNLINATNAALQTPLHVAARNGLTMVVQELLGKGASVLAVDENGYTPALACAPNKDVADCLALILATMMPVSSSSPLSSLTFNAINRYTNTSKTVSFEALPIMRNEPSSYCSFNNIGGEQEYLYTDVDELNDSDSETY.

27 ANK repeats span residues 40 to 69 (EKRTPLHAAAYLGDAEIIELLILSGARVNA), 73 to 102 (KWLTPLHRAVASCSEEAVQVLLKHSADVNA), 106 to 135 (NWQTPLHIAAANKAVKCAEALVPLLSNVNV), 139 to 168 (AGRTALHHAAFSGHGEMVKLLLSRGANINA), 172 to 201 (KDRRAIHWAAYMGHIEVVKLLVSHGAEVTC), 205 to 234 (KSYTPLHAAASSGMISVVKYLLDLGVDMNE), 238 to 267 (YGNTPLHVACYNGQDVVVNELIDCGAIVNQ), 271 to 301 (KGFTPLHFAAASTHGALCLELLVGNGADVNM), 305 to 334 (DGKTPLHMTALHGRFSRSQTIIQSGAVIDC), 338 to 367 (NGNTPLHIAARYGHELLINTLITSGADTAK), 371 to 400 (HGMFPLHLAALSGFSDCCRKLLSSGFDIDT), 404 to 433 (FGRTCLHAAAAGGNLECLNLLLNTGADFNK), 437 to 466 (FGRSPLHYAAANCNYQCLFALVGSGASVND), 470 to 500 (RGCTPLHYAATSDTDGKCLEYLLRNDANPGI), 504 to 534 (QGYNAVHYSAAYGHRLCLQLIASETPLDVLM), 549 to 578 (ATISPLHLAAYHGHHQALEVLVQSLLDLDV), 582 to 611 (SGRTPLDLAAFKGHVECVDVLINQGASILV), 616 to 645 (LKRTPIHAAATNGHSECLRLLIGNAEPQNA), 652 to 681 (NGQTPLMLSVLNGHTDCVYSLLNKGANVDA), 685 to 714 (WGRTALHRGAVTGHEECVDALLQHGAKCLL), 718 to 747 (RGRTPIHLSAACGHIGVLGALLQSAASMDA), 755 to 784 (HGYTALHWACYNGHETCVELLLEQEVFQKT), 787 to 817 (NAFSPLHCAVINDNEGAAEMLIDTLGASIVN), 822 to 851 (KGRTPLHAAAFTDHVECLQLLLSHNAQVNS), 855 to 885 (TGKTPLMMAAENGQTNTVEMLVSSASAELTL), 889 to 918 (SKNTALHLACSKGHETSALLILEKITDRNL), and 925 to 954 (ALQTPLHVAARNGLTMVVQELLGKGASVLA). Phosphoserine occurs at positions 1007 and 1011.

As to quaternary structure, protein phosphatase 6 (PP6) holoenzyme is proposed to be a heterotrimeric complex formed by the catalytic subunit, a SAPS domain-containing subunit (PP6R) and an ankyrin repeat-domain containing regulatory subunit (ARS). Interacts with PPP6C, PPP6R1 and PPP6R3. Interacts with PPP1C and HNRPK. Post-translationally, ubiquitinated by the ECS(RAB40C) complex leading to its degradation and decreased PP6 activity.

The protein localises to the nucleus. It localises to the nucleoplasm. The protein resides in the cytoplasm. Its subcellular location is the cytosol. It is found in the cell projection. The protein localises to the lamellipodium. Its function is as follows. Regulatory subunit of protein phosphatase 6 (PP6) that may be involved in the recognition of phosphoprotein substrates. Involved in the PP6-mediated dephosphorylation of NFKBIE opposing its degradation in response to TNF-alpha. Selectively inhibits the phosphatase activity of PPP1C. Targets PPP1C to modulate HNRPK phosphorylation. Involved in the PP6-mediated dephosphorylation of MOB1 and induced focal adhesion assembly during cell migration. The protein is Serine/threonine-protein phosphatase 6 regulatory ankyrin repeat subunit A of Homo sapiens (Human).